A 1144-amino-acid chain; its full sequence is Probable translation initiation factor IF-2 (1144 aa).

The 131-residue stretch at F232–I362 folds into the DOD-type homing endonuclease domain. The region spanning T551–L768 is the tr-type G domain. Residues D624–H628 and N678–D681 each bind GTP.

This sequence belongs to the TRAFAC class translation factor GTPase superfamily. Classic translation factor GTPase family. IF-2 subfamily. Post-translationally, this protein undergoes a protein self splicing that involves a post-translational excision of the intervening region (intein) followed by peptide ligation.

Functionally, function in general translation initiation by promoting the binding of the formylmethionine-tRNA to ribosomes. Seems to function along with eIF-2. This is Probable translation initiation factor IF-2 (infB) from Thermococcus kodakarensis (strain ATCC BAA-918 / JCM 12380 / KOD1) (Pyrococcus kodakaraensis (strain KOD1)).